Reading from the N-terminus, the 161-residue chain is Nucleotide-binding protein Nmul_A1044 (161 aa).

It belongs to the YajQ family.

Nucleotide-binding protein. The sequence is that of Nucleotide-binding protein Nmul_A1044 from Nitrosospira multiformis (strain ATCC 25196 / NCIMB 11849 / C 71).